Here is a 347-residue protein sequence, read N- to C-terminus: tRNA dimethylallyltransferase (347 aa).

20–27 (GPTASGKT) is an ATP binding site. Residue 22–27 (TASGKT) coordinates substrate. Interaction with substrate tRNA regions lie at residues 45–48 (DSAM), 169–173 (QRLMR), and 275–280 (RCVGYR).

The protein belongs to the IPP transferase family. Monomer. It depends on Mg(2+) as a cofactor.

It carries out the reaction adenosine(37) in tRNA + dimethylallyl diphosphate = N(6)-dimethylallyladenosine(37) in tRNA + diphosphate. Its function is as follows. Catalyzes the transfer of a dimethylallyl group onto the adenine at position 37 in tRNAs that read codons beginning with uridine, leading to the formation of N6-(dimethylallyl)adenosine (i(6)A). This is tRNA dimethylallyltransferase from Marinobacter nauticus (strain ATCC 700491 / DSM 11845 / VT8) (Marinobacter aquaeolei).